The sequence spans 156 residues: 6,7-dimethyl-8-ribityllumazine synthase (156 aa).

Residues Phe-22, 57–59 (AVE), and 81–83 (SVI) each bind 5-amino-6-(D-ribitylamino)uracil. 86–87 (GT) serves as a coordination point for (2S)-2-hydroxy-3-oxobutyl phosphate. His-89 serves as the catalytic Proton donor. 5-amino-6-(D-ribitylamino)uracil is bound at residue Phe-114. Position 128 (Arg-128) interacts with (2S)-2-hydroxy-3-oxobutyl phosphate.

It belongs to the DMRL synthase family. Forms an icosahedral capsid composed of 60 subunits, arranged as a dodecamer of pentamers.

It catalyses the reaction (2S)-2-hydroxy-3-oxobutyl phosphate + 5-amino-6-(D-ribitylamino)uracil = 6,7-dimethyl-8-(1-D-ribityl)lumazine + phosphate + 2 H2O + H(+). The protein operates within cofactor biosynthesis; riboflavin biosynthesis; riboflavin from 2-hydroxy-3-oxobutyl phosphate and 5-amino-6-(D-ribitylamino)uracil: step 1/2. Catalyzes the formation of 6,7-dimethyl-8-ribityllumazine by condensation of 5-amino-6-(D-ribitylamino)uracil with 3,4-dihydroxy-2-butanone 4-phosphate. This is the penultimate step in the biosynthesis of riboflavin. The sequence is that of 6,7-dimethyl-8-ribityllumazine synthase from Aliivibrio salmonicida (strain LFI1238) (Vibrio salmonicida (strain LFI1238)).